Reading from the N-terminus, the 321-residue chain is Biotin synthase (321 aa).

Residues 37–264 (RDMELCTLSS…TSVIRLSAGR (228 aa)) enclose the Radical SAM core domain. C52, C56, and C59 together coordinate [4Fe-4S] cluster. [2Fe-2S] cluster-binding residues include C96, C127, C187, and R259.

The protein belongs to the radical SAM superfamily. Biotin synthase family. In terms of assembly, homodimer. [4Fe-4S] cluster serves as cofactor. It depends on [2Fe-2S] cluster as a cofactor.

It catalyses the reaction (4R,5S)-dethiobiotin + (sulfur carrier)-SH + 2 reduced [2Fe-2S]-[ferredoxin] + 2 S-adenosyl-L-methionine = (sulfur carrier)-H + biotin + 2 5'-deoxyadenosine + 2 L-methionine + 2 oxidized [2Fe-2S]-[ferredoxin]. It functions in the pathway cofactor biosynthesis; biotin biosynthesis; biotin from 7,8-diaminononanoate: step 2/2. Functionally, catalyzes the conversion of dethiobiotin (DTB) to biotin by the insertion of a sulfur atom into dethiobiotin via a radical-based mechanism. This is Biotin synthase from Coxiella burnetii (strain CbuK_Q154) (Coxiella burnetii (strain Q154)).